An 88-amino-acid polypeptide reads, in one-letter code: Small ribosomal subunit protein uS15c (88 aa).

The protein belongs to the universal ribosomal protein uS15 family. Part of the 30S ribosomal subunit.

It localises to the plastid. Its subcellular location is the chloroplast. In Arabidopsis thaliana (Mouse-ear cress), this protein is Small ribosomal subunit protein uS15c (rps15).